A 388-amino-acid chain; its full sequence is 4-hydroxy-3-methylbut-2-en-1-yl diphosphate synthase (flavodoxin) (388 aa).

Residues 1-22 (MTSVNLGMPAAPQPVLSPRRKT) are disordered. [4Fe-4S] cluster contacts are provided by C281, C284, C316, and E323.

The protein belongs to the IspG family. The cofactor is [4Fe-4S] cluster.

The enzyme catalyses (2E)-4-hydroxy-3-methylbut-2-enyl diphosphate + oxidized [flavodoxin] + H2O + 2 H(+) = 2-C-methyl-D-erythritol 2,4-cyclic diphosphate + reduced [flavodoxin]. The protein operates within isoprenoid biosynthesis; isopentenyl diphosphate biosynthesis via DXP pathway; isopentenyl diphosphate from 1-deoxy-D-xylulose 5-phosphate: step 5/6. In terms of biological role, converts 2C-methyl-D-erythritol 2,4-cyclodiphosphate (ME-2,4cPP) into 1-hydroxy-2-methyl-2-(E)-butenyl 4-diphosphate. This chain is 4-hydroxy-3-methylbut-2-en-1-yl diphosphate synthase (flavodoxin), found in Kocuria rhizophila (strain ATCC 9341 / DSM 348 / NBRC 103217 / DC2201).